The following is a 71-amino-acid chain: Small ribosomal subunit protein bS21 (71 aa).

The protein belongs to the bacterial ribosomal protein bS21 family.

The protein is Small ribosomal subunit protein bS21 of Marinobacter nauticus (strain ATCC 700491 / DSM 11845 / VT8) (Marinobacter aquaeolei).